The chain runs to 34 residues: Surfactant protein C (34 aa).

A lipid anchor (S-palmitoyl cysteine) is attached at Cys4.

The protein localises to the secreted. It localises to the extracellular space. Its subcellular location is the surface film. In terms of biological role, pulmonary surfactant associated proteins promote alveolar stability by lowering the surface tension at the air-liquid interface in the peripheral air spaces. The protein is Surfactant protein C (SFTPC) of Canis lupus familiaris (Dog).